The following is a 336-amino-acid chain: D-alanine--D-alanine ligase (336 aa).

The 207-residue stretch at 124 to 330 (KMWFSALGVP…FTEYLIDVIG (207 aa)) folds into the ATP-grasp domain. 154–209 (AFDNWGSVFVKAASQGSSVGCYKVDVKANIANVLKDAFSYAPYVVVEQTIHARELE) is an ATP binding site. Mg(2+) contacts are provided by aspartate 284, glutamate 297, and asparagine 299.

The protein belongs to the D-alanine--D-alanine ligase family. It depends on Mg(2+) as a cofactor. Requires Mn(2+) as cofactor.

Its subcellular location is the cytoplasm. The catalysed reaction is 2 D-alanine + ATP = D-alanyl-D-alanine + ADP + phosphate + H(+). Its pathway is cell wall biogenesis; peptidoglycan biosynthesis. Its function is as follows. Cell wall formation. This chain is D-alanine--D-alanine ligase, found in Shewanella frigidimarina (strain NCIMB 400).